We begin with the raw amino-acid sequence, 231 residues long: NKG2-C type II integral membrane protein (231 aa).

A compositionally biased stretch (polar residues) spans methionine 1–serine 12. The interval methionine 1–isoleucine 31 is disordered. The Cytoplasmic portion of the chain corresponds to methionine 1–lysine 70. The segment covering aspartate 16–lysine 28 has biased composition (basic and acidic residues). The helical; Signal-anchor for type II membrane protein transmembrane segment at leucine 71 to leucine 93 threads the bilayer. Over isoleucine 94–leucine 231 the chain is Extracellular. Asparagine 100 carries an N-linked (GlcNAc...) asparagine glycan. One can recognise a C-type lectin domain in the interval histidine 116–histidine 229. Intrachain disulfides connect cysteine 117-cysteine 128, cysteine 145-cysteine 227, and cysteine 206-cysteine 219. Asparagine 149 carries N-linked (GlcNAc...) asparagine glycosylation.

In terms of assembly, heterodimer with KLRD1; disulfide-linked. KLRD1-KLRC2 receptor complex interacts with TYROBP/DAP12 homodimer; this interaction is necessary for the expression on the cell surface. In terms of tissue distribution, natural killer cells.

The protein resides in the cell membrane. Its function is as follows. Immune activating receptor involved in self-nonself discrimination. In complex with KLRD1 on cytotoxic lymphocyte subsets, recognizes non-classical major histocompatibility MHC-E loaded with signal sequence-derived peptides from non-classical MHC-G molecules, likely playing a role in the generation and effector functions of adaptive natural killer (NK) cells and in maternal-fetal tolerance during pregnancy. Regulates the effector functions of terminally differentiated cytotoxic lymphocyte subsets, and in particular may play a role in adaptive NK cell response to viral infection. Upon MHC-E-peptide binding, transmits intracellular signals via the adapter protein TYROBP/DAP12, triggering the phosphorylation of proximal signaling molecules and cell activation. This Macaca mulatta (Rhesus macaque) protein is NKG2-C type II integral membrane protein (KLRC2).